The sequence spans 468 residues: Flavin-containing monooxygenase FMO GS-OX-like 1 (468 aa).

Position 16 to 21 (16 to 21) interacts with FAD; that stretch reads GLGAAG. 211 to 216 lines the NADP(+) pocket; that stretch reads GSQASG.

Belongs to the FMO family. It depends on FAD as a cofactor.

In terms of biological role, catalyzes the conversion of methylthioalkyl glucosinolates of any chain length into methylsulfinylalkyl glucosinolates. This is Flavin-containing monooxygenase FMO GS-OX-like 1 from Arabidopsis thaliana (Mouse-ear cress).